The sequence spans 505 residues: Putative ribose/galactose/methyl galactoside import ATP-binding protein 1 (505 aa).

ABC transporter domains are found at residues 10–245 (LRLE…VGRS) and 256–501 (RPTD…SGYG). 42-49 (GENGAGKS) contacts ATP.

Belongs to the ABC transporter superfamily. Carbohydrate importer 2 (CUT2) (TC 3.A.1.2) family.

It localises to the cell inner membrane. The enzyme catalyses D-ribose(out) + ATP + H2O = D-ribose(in) + ADP + phosphate + H(+). The catalysed reaction is D-galactose(out) + ATP + H2O = D-galactose(in) + ADP + phosphate + H(+). Functionally, part of an ABC transporter complex involved in carbohydrate import. Could be involved in ribose, galactose and/or methyl galactoside import. Responsible for energy coupling to the transport system. The chain is Putative ribose/galactose/methyl galactoside import ATP-binding protein 1 from Agrobacterium fabrum (strain C58 / ATCC 33970) (Agrobacterium tumefaciens (strain C58)).